A 274-amino-acid polypeptide reads, in one-letter code: uncharacterized protein (274 aa).

Over residues 1–20 the composition is skewed to basic and acidic residues; the sequence is MSLEKSLDEIINERTNGFDH. Disordered stretches follow at residues 1 to 63, 148 to 217, and 230 to 274; these read MSLE…HDLD, NLKG…EDLD, and ASTV…MEAV. A compositionally biased stretch (basic residues) spans 21–44; it reads KHSRRRGSQNRISKKSRLTYKFKR. Positions 45-63 are enriched in basic and acidic residues; that stretch reads ASKEHNSSPDDGPWQHDLD. Positions 85 to 161 constitute an RRM domain; the sequence is FGVRVENLHY…SEIQISKKSP (77 aa). The span at 148–160 shows a compositional bias: polar residues; the sequence is NLKGSEIQISKKS. 2 stretches are compositionally biased toward low complexity: residues 181–190 and 200–211; these read SSRSNRGFNR and RSSSKKSSNNSI. Polar residues predominate over residues 230-245; that stretch reads ASTVSSHSSQDFTPSI. Over residues 263–274 the composition is skewed to acidic residues; that stretch reads LTEEMDLQMEAV.

This is an uncharacterized protein from Schizosaccharomyces pombe (strain 972 / ATCC 24843) (Fission yeast).